Consider the following 66-residue polypeptide: MKLTFVLIVAVLVLAVCNFTVADKANNAEAPEQEKRACTPNGSYCNILSGKLNCCSGWCLALICAG.

The first 22 residues, 1–22 (MKLTFVLIVAVLVLAVCNFTVA), serve as a signal peptide directing secretion. 3 cysteine pairs are disulfide-bonded: Cys-38/Cys-55, Cys-45/Cys-59, and Cys-54/Cys-64.

Belongs to the conotoxin O1 superfamily. In terms of tissue distribution, expressed by the venom duct.

It is found in the secreted. Probable neurotoxin. This is Conotoxin Cal6.38 from Californiconus californicus (California cone).